The following is a 200-amino-acid chain: Exopolysaccharide production protein PSS (200 aa).

The protein belongs to the bacterial sugar transferase family.

The chain is Exopolysaccharide production protein PSS (pss) from Rhizobium leguminosarum bv. phaseoli.